A 180-amino-acid polypeptide reads, in one-letter code: MPHNVVLTGRPGIGKTTVCLKVRNVLEEEGYTVGGIYCPEIREGGRRIGFEIVDLTEGDRYLLAREGASGPRVGRYGVFVDNLERAAESIERAVKRTDVVIVDEVGPMELKSNAFVDAVRRAADAHTPAIFVVHERSRHPVVVDLREERPDVVRFRVTLSNRDELSDRILEHVLEWLEER.

ATP-binding positions include 9–16 (GRPGIGKT) and 99–106 (VVIVDEVG).

The protein belongs to the THEP1 NTPase family.

It carries out the reaction a ribonucleoside 5'-triphosphate + H2O = a ribonucleoside 5'-diphosphate + phosphate + H(+). Functionally, has nucleotide phosphatase activity towards ATP, GTP, CTP, TTP and UTP. May hydrolyze nucleoside diphosphates with lower efficiency. This is Nucleoside-triphosphatase THEP1 from Methanopyrus kandleri (strain AV19 / DSM 6324 / JCM 9639 / NBRC 100938).